Reading from the N-terminus, the 389-residue chain is Succinate--CoA ligase [ADP-forming] subunit beta (389 aa).

Residues 9-244 (KQLLAEYGIP…KTQEDETEVT (236 aa)) form the ATP-grasp domain. ATP-binding positions include Lys46, 53-55 (GRG), Gly102, and Glu107. Asn199 and Asp213 together coordinate Mg(2+). Residues Asn264 and 321–323 (GIV) contribute to the substrate site.

It belongs to the succinate/malate CoA ligase beta subunit family. Heterotetramer of two alpha and two beta subunits. Mg(2+) serves as cofactor.

The catalysed reaction is succinate + ATP + CoA = succinyl-CoA + ADP + phosphate. It catalyses the reaction GTP + succinate + CoA = succinyl-CoA + GDP + phosphate. Its pathway is carbohydrate metabolism; tricarboxylic acid cycle; succinate from succinyl-CoA (ligase route): step 1/1. Succinyl-CoA synthetase functions in the citric acid cycle (TCA), coupling the hydrolysis of succinyl-CoA to the synthesis of either ATP or GTP and thus represents the only step of substrate-level phosphorylation in the TCA. The beta subunit provides nucleotide specificity of the enzyme and binds the substrate succinate, while the binding sites for coenzyme A and phosphate are found in the alpha subunit. The sequence is that of Succinate--CoA ligase [ADP-forming] subunit beta from Xanthomonas axonopodis pv. citri (strain 306).